Reading from the N-terminus, the 615-residue chain is Integral inner nuclear membrane protein ima1 (615 aa).

A run of 3 helical transmembrane segments spans residues 192–212, 247–267, and 323–343; these read FVLW…SIVW, IFYF…WYKM, and QIHA…ISCL. Residues 357-387 form a disordered region; that stretch reads ILKPRKKRQESTSSVHRIGKESSDRKDGISG. Positions 374-384 are enriched in basic and acidic residues; it reads IGKESSDRKDG. The next 2 helical transmembrane spans lie at 563–583 and 586–606; these read AKLL…GWRL and FTMF…VMKH.

It is found in the nucleus inner membrane. Its function is as follows. Inner nuclear membrane protein that specifically binds to heterochromatic regions and promotes the tethering of centromeric DNA to the SUN-KASH complex. Couples centromeres to the nuclear envelope, thus contributing to their association with the microtubule organizing center attachment site and to the positioning of the nucleus at the cell center by microtubules. The chain is Integral inner nuclear membrane protein ima1 (IMA1) from Schizosaccharomyces pombe (strain 972 / ATCC 24843) (Fission yeast).